The following is a 38-amino-acid chain: Small toxic protein BsrG (38 aa).

A helical transmembrane segment spans residues Ile11–Val31.

The protein localises to the cell membrane. In terms of biological role, toxic component of a type I toxin-antitoxin (TA) system; expression in the absence of cognate antisense antitoxin SR4 RNA leads to cell lysis. Induced expression causes membrane invaginations that dislocate the cell wall synthesis machinery, leading to eventual death. Unlike many type I TA systems it does not form pores. Base pairing occurs between the 3' UTRs of bsrG mRNA and SR4 RNA, which leads to initiation of degradation by RNase III (rnc) followed by the action of RNase Y (rny) and RNase R (rnr). Not toxic when expressed in E.coli. When induced during logarithmic growth it only slowly exerts its toxic effect. Expression during log growth leads to significant disturbances of cell envelope biosynthesis and cell morphology, causing cell membrane invaginations and delocalization of cell division and cell wall synthesis machinery. Cell lysis depends on mreB, lytC and lytD, suggesting expression of bsrG triggers autolysis rather than disintegration of the membrane. Additionally expression of bsrG also inhibits transcription. This chain is Small toxic protein BsrG, found in Bacillus subtilis (strain 168).